A 432-amino-acid polypeptide reads, in one-letter code: 23S rRNA (uracil(1939)-C(5))-methyltransferase RlmD (432 aa).

The TRAM domain maps to 10–68 (RVTTREIITVTTDGLDAFGQGVARHHGKALFIAGLLPGERAEVVLSEDKKQFARGDVKK). The [4Fe-4S] cluster site is built by Cys-81, Cys-87, Cys-90, and Cys-162. S-adenosyl-L-methionine contacts are provided by Gln-265, Phe-294, Asn-299, Glu-315, Asn-342, and Asp-363. The active-site Nucleophile is Cys-389.

This sequence belongs to the class I-like SAM-binding methyltransferase superfamily. RNA M5U methyltransferase family. RlmD subfamily.

It catalyses the reaction uridine(1939) in 23S rRNA + S-adenosyl-L-methionine = 5-methyluridine(1939) in 23S rRNA + S-adenosyl-L-homocysteine + H(+). Functionally, catalyzes the formation of 5-methyl-uridine at position 1939 (m5U1939) in 23S rRNA. This Cronobacter sakazakii (strain ATCC BAA-894) (Enterobacter sakazakii) protein is 23S rRNA (uracil(1939)-C(5))-methyltransferase RlmD.